A 241-amino-acid chain; its full sequence is Uracil-DNA glycosylase (241 aa).

D68 (proton acceptor) is an active-site residue.

This sequence belongs to the uracil-DNA glycosylase (UDG) superfamily. UNG family.

The protein localises to the cytoplasm. The enzyme catalyses Hydrolyzes single-stranded DNA or mismatched double-stranded DNA and polynucleotides, releasing free uracil.. Excises uracil residues from the DNA which can arise as a result of misincorporation of dUMP residues by DNA polymerase or due to deamination of cytosine. This Rhizobium meliloti (strain 1021) (Ensifer meliloti) protein is Uracil-DNA glycosylase.